The chain runs to 463 residues: Glutamate--tRNA ligase 1 (463 aa).

The 'HIGH' region motif lies at 10–20 (PSPTGFLHIGS). Residues 239–243 (KLSKR) carry the 'KMSKS' region motif. Residue Lys-242 coordinates ATP.

Belongs to the class-I aminoacyl-tRNA synthetase family. Glutamate--tRNA ligase type 1 subfamily. Monomer.

It is found in the cytoplasm. It carries out the reaction tRNA(Glu) + L-glutamate + ATP = L-glutamyl-tRNA(Glu) + AMP + diphosphate. Functionally, catalyzes the attachment of glutamate to tRNA(Glu) in a two-step reaction: glutamate is first activated by ATP to form Glu-AMP and then transferred to the acceptor end of tRNA(Glu). The polypeptide is Glutamate--tRNA ligase 1 (Rickettsia canadensis (strain McKiel)).